Here is a 97-residue protein sequence, read N- to C-terminus: Aspartyl/glutamyl-tRNA(Asn/Gln) amidotransferase subunit C (97 aa).

The protein belongs to the GatC family. In terms of assembly, heterotrimer of A, B and C subunits.

It catalyses the reaction L-glutamyl-tRNA(Gln) + L-glutamine + ATP + H2O = L-glutaminyl-tRNA(Gln) + L-glutamate + ADP + phosphate + H(+). The catalysed reaction is L-aspartyl-tRNA(Asn) + L-glutamine + ATP + H2O = L-asparaginyl-tRNA(Asn) + L-glutamate + ADP + phosphate + 2 H(+). Allows the formation of correctly charged Asn-tRNA(Asn) or Gln-tRNA(Gln) through the transamidation of misacylated Asp-tRNA(Asn) or Glu-tRNA(Gln) in organisms which lack either or both of asparaginyl-tRNA or glutaminyl-tRNA synthetases. The reaction takes place in the presence of glutamine and ATP through an activated phospho-Asp-tRNA(Asn) or phospho-Glu-tRNA(Gln). This Anaeromyxobacter sp. (strain K) protein is Aspartyl/glutamyl-tRNA(Asn/Gln) amidotransferase subunit C.